Reading from the N-terminus, the 293-residue chain is Elongation factor Ts (293 aa).

An involved in Mg(2+) ion dislocation from EF-Tu region spans residues 80–83 (TDFV).

The protein belongs to the EF-Ts family.

It localises to the cytoplasm. In terms of biological role, associates with the EF-Tu.GDP complex and induces the exchange of GDP to GTP. It remains bound to the aminoacyl-tRNA.EF-Tu.GTP complex up to the GTP hydrolysis stage on the ribosome. The polypeptide is Elongation factor Ts (Paraburkholderia phytofirmans (strain DSM 17436 / LMG 22146 / PsJN) (Burkholderia phytofirmans)).